We begin with the raw amino-acid sequence, 427 residues long: Serine--tRNA ligase (427 aa).

230–232 (TSE) is an L-serine binding site. Residues 260–262 (RRE) and V276 each bind ATP. Position 283 (E283) interacts with L-serine. Residue 347–350 (ELTS) participates in ATP binding. An L-serine-binding site is contributed by T387.

It belongs to the class-II aminoacyl-tRNA synthetase family. Type-1 seryl-tRNA synthetase subfamily. In terms of assembly, homodimer. The tRNA molecule binds across the dimer.

It localises to the cytoplasm. The catalysed reaction is tRNA(Ser) + L-serine + ATP = L-seryl-tRNA(Ser) + AMP + diphosphate + H(+). The enzyme catalyses tRNA(Sec) + L-serine + ATP = L-seryl-tRNA(Sec) + AMP + diphosphate + H(+). It participates in aminoacyl-tRNA biosynthesis; selenocysteinyl-tRNA(Sec) biosynthesis; L-seryl-tRNA(Sec) from L-serine and tRNA(Sec): step 1/1. Its function is as follows. Catalyzes the attachment of serine to tRNA(Ser). Is also able to aminoacylate tRNA(Sec) with serine, to form the misacylated tRNA L-seryl-tRNA(Sec), which will be further converted into selenocysteinyl-tRNA(Sec). This chain is Serine--tRNA ligase, found in Micrococcus luteus (strain ATCC 4698 / DSM 20030 / JCM 1464 / CCM 169 / CCUG 5858 / IAM 1056 / NBRC 3333 / NCIMB 9278 / NCTC 2665 / VKM Ac-2230) (Micrococcus lysodeikticus).